The sequence spans 241 residues: Fatty acid metabolism regulator protein (241 aa).

In terms of domain architecture, HTH gntR-type spans 11 to 79; that stretch reads QSPAALAEEY…HGKPTKVNNI (69 aa). The H-T-H motif DNA-binding region spans 39–58; sequence ERDLADKIGVTRTTLREVLQ.

Homodimer.

Its subcellular location is the cytoplasm. Functionally, multifunctional regulator of fatty acid metabolism. This chain is Fatty acid metabolism regulator protein, found in Haemophilus influenzae (strain 86-028NP).